The following is a 192-amino-acid chain: MEVILLERISKLGQMGETVKVRDGFARNYLLPLGKALRANAANKARFESERATLEARNLERKSEAQKVADVLDGKSFIVVRSAGETGQLYGSVAARDVVEVLAAEGFNIGRNQVHLNTPIKAIGLHKVELQLHAEVEIHVELNVARSAEEAERQAKGEELTSVDAIYGVDEDALRPEDFFDPEADGIDEDEA.

The interval 172–192 (DALRPEDFFDPEADGIDEDEA) is disordered. A compositionally biased stretch (acidic residues) spans 179 to 192 (FFDPEADGIDEDEA).

It belongs to the bacterial ribosomal protein bL9 family.

Its function is as follows. Binds to the 23S rRNA. The chain is Large ribosomal subunit protein bL9 from Rhizobium etli (strain CIAT 652).